Here is a 247-residue protein sequence, read N- to C-terminus: tRNA pseudouridine synthase A (247 aa).

Asp57 acts as the Nucleophile in catalysis. Tyr115 contributes to the substrate binding site.

This sequence belongs to the tRNA pseudouridine synthase TruA family. In terms of assembly, homodimer.

The enzyme catalyses uridine(38/39/40) in tRNA = pseudouridine(38/39/40) in tRNA. Functionally, formation of pseudouridine at positions 38, 39 and 40 in the anticodon stem and loop of transfer RNAs. The chain is tRNA pseudouridine synthase A from Chlorobaculum tepidum (strain ATCC 49652 / DSM 12025 / NBRC 103806 / TLS) (Chlorobium tepidum).